A 494-amino-acid polypeptide reads, in one-letter code: mRNA decay activator protein ZFP36L2 (494 aa).

At Ser57 the chain carries Phosphoserine. The segment at 93–113 is disordered; it reads GGPTSYGTLKEPSGGGGTALL. Ser125 bears the Phosphoserine mark. The RNA-binding motif lies at 153–158; it reads RYKTEL. 2 consecutive C3H1-type zinc fingers follow at residues 153–181 and 191–219; these read RYKT…HGFH and KYKT…HNAD. An RNA-binding region spans residues 170–211; it reads YGEKCQFAHGFHELRSLTRHPKYKTELCRTFHTIGFCPYGPR. Thr238 carries the post-translational modification Phosphothreonine. Disordered regions lie at residues 257–293 and 397–494; these read SLSF…PPSC and QQQQ…ISDD. Residues 406-415 are compositionally biased toward pro residues; that stretch reads PAQPPAPPSA. Composition is skewed to low complexity over residues 416 to 435 and 459 to 478; these read TLPA…QLPR and YLSG…PSLD. 2 positions are modified to phosphoserine; by RPS6KA1: Ser490 and Ser492.

Associates with the cytoplasmic CCR4-NOT deadenylase to trigger ARE-containing mRNA deadenylation and decay processes. Interacts with CNOT7; this interaction is inhibited in response to phorbol 12-myristate 13-acetate (PMA) treatment in a p38 MAPK-dependent manner. Interacts with CNOT6L. Phosphorylated by RPS6KA1 at Ser-490 and Ser-492 upon phorbol 12-myristate 13-acetate (PMA) treatment; this phosphorylation results in dissociation of the CCR4-NOT-deadenylase complex and induces p38 MAPK-mediated stabilization of the low-density lipoprotein (LDL) receptor (LDLR) mRNA. Phosphorylation occurs during early preadipocyte differentiation. In terms of tissue distribution, expressed mainly in the basal epidermal layer, weakly in the suprabasal epidermal layers. Expressed in epidermal keratinocytes (at protein level). Expressed in oocytes.

It is found in the nucleus. The protein localises to the cytoplasm. In terms of biological role, zinc-finger RNA-binding protein that destabilizes several cytoplasmic AU-rich element (ARE)-containing mRNA transcripts by promoting their poly(A) tail removal or deadenylation, and hence provide a mechanism for attenuating protein synthesis. Acts as a 3'-untranslated region (UTR) ARE mRNA-binding adapter protein to communicate signaling events to the mRNA decay machinery. Functions by recruiting the CCR4-NOT deadenylase complex and probably other components of the cytoplasmic RNA decay machinery to the bound ARE-containing mRNAs, and hence promotes ARE-mediated mRNA deadenylation and decay processes. Binds to 3'-UTR ARE of numerous mRNAs. Promotes ARE-containing mRNA decay of the low-density lipoprotein (LDL) receptor (LDLR) mRNA in response to phorbol 12-myristate 13-acetate (PMA) treatment in a p38 MAPK-dependent manner. Positively regulates early adipogenesis by promoting ARE-mediated mRNA decay of immediate early genes (IEGs). Plays a role in mature peripheral neuron integrity by promoting ARE-containing mRNA decay of the transcriptional repressor REST mRNA. Plays a role in ovulation and oocyte meiotic maturation by promoting ARE-mediated mRNA decay of the luteinizing hormone receptor LHCGR mRNA. Acts as a negative regulator of erythroid cell differentiation: promotes glucocorticoid-induced self-renewal of erythroid cells by binding mRNAs that are induced or highly expressed during terminal erythroid differentiation and promotes their degradation, preventing erythroid cell differentiation. In association with ZFP36L1 maintains quiescence on developing B lymphocytes by promoting ARE-mediated decay of several mRNAs encoding cell cycle regulators that help B cells progress through the cell cycle, and hence ensuring accurate variable-diversity-joining (VDJ) recombination process and functional immune cell formation. Together with ZFP36L1 is also necessary for thymocyte development and prevention of T-cell acute lymphoblastic leukemia (T-ALL) transformation by promoting ARE-mediated mRNA decay of the oncogenic transcription factor NOTCH1 mRNA. The chain is mRNA decay activator protein ZFP36L2 from Homo sapiens (Human).